We begin with the raw amino-acid sequence, 240 residues long: Triosephosphate isomerase (240 aa).

8–10 is a substrate binding site; it reads NWK. Residue H93 is the Electrophile of the active site. Residue E160 is the Proton acceptor of the active site. G166 provides a ligand contact to substrate.

It belongs to the triosephosphate isomerase family. In terms of assembly, homodimer.

Its subcellular location is the cytoplasm. It catalyses the reaction D-glyceraldehyde 3-phosphate = dihydroxyacetone phosphate. It participates in carbohydrate biosynthesis; gluconeogenesis. Its pathway is carbohydrate degradation; glycolysis; D-glyceraldehyde 3-phosphate from glycerone phosphate: step 1/1. Involved in the gluconeogenesis. Catalyzes stereospecifically the conversion of dihydroxyacetone phosphate (DHAP) to D-glyceraldehyde-3-phosphate (G3P). The chain is Triosephosphate isomerase from Ehrlichia chaffeensis (strain ATCC CRL-10679 / Arkansas).